Consider the following 540-residue polypeptide: T-complex protein 1 subunit alpha (540 aa).

It belongs to the TCP-1 chaperonin family. Component of the T-complex protein 1 (TCP1) complex.

It is found in the cytoplasm. Molecular chaperone; assists the folding of proteins upon ATP hydrolysis. This is T-complex protein 1 subunit alpha (TCP1) from Encephalitozoon cuniculi (strain GB-M1) (Microsporidian parasite).